Consider the following 267-residue polypeptide: 3-methyl-2-oxobutanoate hydroxymethyltransferase (267 aa).

Asp-46 and Asp-85 together coordinate Mg(2+). Residues 46-47 (DS), Asp-85, and Lys-115 each bind 3-methyl-2-oxobutanoate. Residue Glu-117 coordinates Mg(2+). The Proton acceptor role is filled by Glu-184.

Belongs to the PanB family. In terms of assembly, homodecamer; pentamer of dimers. The cofactor is Mg(2+).

Its subcellular location is the cytoplasm. It carries out the reaction 3-methyl-2-oxobutanoate + (6R)-5,10-methylene-5,6,7,8-tetrahydrofolate + H2O = 2-dehydropantoate + (6S)-5,6,7,8-tetrahydrofolate. It participates in cofactor biosynthesis; (R)-pantothenate biosynthesis; (R)-pantoate from 3-methyl-2-oxobutanoate: step 1/2. In terms of biological role, catalyzes the reversible reaction in which hydroxymethyl group from 5,10-methylenetetrahydrofolate is transferred onto alpha-ketoisovalerate to form ketopantoate. The sequence is that of 3-methyl-2-oxobutanoate hydroxymethyltransferase from Citrifermentans bemidjiense (strain ATCC BAA-1014 / DSM 16622 / JCM 12645 / Bem) (Geobacter bemidjiensis).